The primary structure comprises 677 residues: DNA ligase (677 aa).

NAD(+) contacts are provided by residues 34–38 (DLAFD), 83–84 (SL), and E115. Catalysis depends on K117, which acts as the N6-AMP-lysine intermediate. R138, E180, K297, and K321 together coordinate NAD(+). Residues C416, C419, C434, and C439 each contribute to the Zn(2+) site. The 82-residue stretch at 596–677 (KKTSQLAGLT…LIKMLETEQA (82 aa)) folds into the BRCT domain.

This sequence belongs to the NAD-dependent DNA ligase family. LigA subfamily. It depends on Mg(2+) as a cofactor. Mn(2+) is required as a cofactor.

It catalyses the reaction NAD(+) + (deoxyribonucleotide)n-3'-hydroxyl + 5'-phospho-(deoxyribonucleotide)m = (deoxyribonucleotide)n+m + AMP + beta-nicotinamide D-nucleotide.. DNA ligase that catalyzes the formation of phosphodiester linkages between 5'-phosphoryl and 3'-hydroxyl groups in double-stranded DNA using NAD as a coenzyme and as the energy source for the reaction. It is essential for DNA replication and repair of damaged DNA. This chain is DNA ligase, found in Acidobacterium capsulatum (strain ATCC 51196 / DSM 11244 / BCRC 80197 / JCM 7670 / NBRC 15755 / NCIMB 13165 / 161).